The primary structure comprises 456 residues: Protein COBRA (456 aa).

The N-terminal stretch at 1-36 (MESFFSRSTSIVSKLSFLALWIVFLISSSSFTSTEA) is a signal peptide. 9 N-linked (GlcNAc...) asparagine glycosylation sites follow: Asn-45, Asn-170, Asn-178, Asn-217, Asn-242, Asn-258, Asn-328, Asn-343, and Asn-362. Asn-431 carries the GPI-anchor amidated asparagine lipid modification. Positions 432 to 456 (GGSRSQFSFVAAVLLPLLVFFFFSA) are cleaved as a propeptide — removed in mature form.

Belongs to the COBRA family. Expressed in roots, stems, leaves, flowers and siliques. Up-regulated in the root zone of rapid longitudinal expansion.

Its subcellular location is the lateral cell membrane. Functionally, involved in determining the orientation of cell expansion, probably by playing an important role in cellulose deposition. May act by recruiting cellulose synthesizing complexes to discrete positions on the cell surface. This is Protein COBRA (COB) from Arabidopsis thaliana (Mouse-ear cress).